Reading from the N-terminus, the 506-residue chain is Galactose/methyl galactoside import ATP-binding protein MglA (506 aa).

2 consecutive ABC transporter domains span residues 14-249 and 264-506; these read LEMS…VGRS and VILE…SLHL. Residue 46-53 coordinates ATP; sequence GENGAGKS.

Belongs to the ABC transporter superfamily. Galactose/methyl galactoside importer (TC 3.A.1.2.3) family. As to quaternary structure, the complex is composed of one ATP-binding protein (MglA), two transmembrane proteins (MglC) and a solute-binding protein (MglB).

The protein resides in the cell inner membrane. It catalyses the reaction D-galactose(out) + ATP + H2O = D-galactose(in) + ADP + phosphate + H(+). The catalysed reaction is methyl beta-D-galactoside(out) + ATP + H2O = methyl beta-D-galactoside(in) + ADP + phosphate + H(+). In terms of biological role, part of the ABC transporter complex MglABC involved in galactose/methyl galactoside import. Responsible for energy coupling to the transport system. The chain is Galactose/methyl galactoside import ATP-binding protein MglA from Escherichia coli (strain K12).